Consider the following 508-residue polypeptide: Photosystem II CP47 reaction center protein (508 aa).

The next 6 membrane-spanning stretches (helical) occupy residues 21 to 36, 101 to 115, 140 to 156, 203 to 218, 237 to 252, and 457 to 472; these read SVHI…WAGS, IVFS…IWHW, GIHL…FGAF, IAAG…FHLS, VLSS…AFVV, and SFAL…HGAR.

The protein belongs to the PsbB/PsbC family. PsbB subfamily. As to quaternary structure, PSII is composed of 1 copy each of membrane proteins PsbA, PsbB, PsbC, PsbD, PsbE, PsbF, PsbH, PsbI, PsbJ, PsbK, PsbL, PsbM, PsbT, PsbX, PsbY, PsbZ, Psb30/Ycf12, at least 3 peripheral proteins of the oxygen-evolving complex and a large number of cofactors. It forms dimeric complexes. Binds multiple chlorophylls. PSII binds additional chlorophylls, carotenoids and specific lipids. serves as cofactor.

It is found in the plastid. The protein localises to the chloroplast thylakoid membrane. Its function is as follows. One of the components of the core complex of photosystem II (PSII). It binds chlorophyll and helps catalyze the primary light-induced photochemical processes of PSII. PSII is a light-driven water:plastoquinone oxidoreductase, using light energy to abstract electrons from H(2)O, generating O(2) and a proton gradient subsequently used for ATP formation. The sequence is that of Photosystem II CP47 reaction center protein from Phaseolus vulgaris (Kidney bean).